The chain runs to 243 residues: MSDMAMIRIGILIAGLLLVAAIFLFGRPKKSPQGRRVDKDEGQPRERREPVISSEFGVEDDAAERAEGVEQSELNLEGQDASGGNEVGKRPNQDFDKIVSLFVAAKAGQVLRGEDVVVAAEKTGLVFGHMNVFHRLVEGHPERGPIFSMASILKPGSFDMANIREMQTPAIAFFLTLPAPMTALDAWEKMLPTVQRMAELLDGVVLDDSRNALGRQRVAHIRDELRAYDRQHQAPPLTKSPRW.

Over 1–4 (MSDM) the chain is Periplasmic. A helical transmembrane segment spans residues 5 to 25 (AMIRIGILIAGLLLVAAIFLF). Residues 26–243 (GRPKKSPQGR…APPLTKSPRW (218 aa)) lie on the Cytoplasmic side of the membrane. Positions 30–89 (KSPQGRRVDKDEGQPRERREPVISSEFGVEDDAAERAEGVEQSELNLEGQDASGGNEVGK) are disordered. Residues 35 to 50 (RRVDKDEGQPRERREP) are compositionally biased toward basic and acidic residues.

This sequence belongs to the ZipA family. Interacts with FtsZ via their C-terminal domains.

The protein localises to the cell inner membrane. Its function is as follows. Essential cell division protein that stabilizes the FtsZ protofilaments by cross-linking them and that serves as a cytoplasmic membrane anchor for the Z ring. Also required for the recruitment to the septal ring of downstream cell division proteins. The polypeptide is Cell division protein ZipA (Xanthomonas euvesicatoria pv. vesicatoria (strain 85-10) (Xanthomonas campestris pv. vesicatoria)).